We begin with the raw amino-acid sequence, 407 residues long: Proteasome-activating nucleotidase (407 aa).

A coiled-coil region spans residues 22-67 (KEKTQIAELESKVLRLELKNKDINRENVQIKKENEILKRELDKLRI). Residues 192-197 (GTGKTL) and H331 each bind ATP. A docks into pockets in the proteasome alpha-ring to cause gate opening region spans residues 405–407 (MYG).

Belongs to the AAA ATPase family. As to quaternary structure, homohexamer. The hexameric complex has a two-ring architecture resembling a top hat that caps the 20S proteasome core at one or both ends. Upon ATP-binding, the C-terminus of PAN interacts with the alpha-rings of the proteasome core by binding to the intersubunit pockets.

Its subcellular location is the cytoplasm. ATPase which is responsible for recognizing, binding, unfolding and translocation of substrate proteins into the archaeal 20S proteasome core particle. Is essential for opening the gate of the 20S proteasome via an interaction with its C-terminus, thereby allowing substrate entry and access to the site of proteolysis. Thus, the C-termini of the proteasomal ATPase function like a 'key in a lock' to induce gate opening and therefore regulate proteolysis. Unfolding activity requires energy from ATP hydrolysis, whereas ATP binding alone promotes ATPase-20S proteasome association which triggers gate opening, and supports translocation of unfolded substrates. The chain is Proteasome-activating nucleotidase from Methanococcus maripaludis (strain DSM 14266 / JCM 13030 / NBRC 101832 / S2 / LL).